Reading from the N-terminus, the 470-residue chain is Cysteine--tRNA ligase (470 aa).

Cys-27 provides a ligand contact to Zn(2+). The 'HIGH' region signature appears at 29-39; the sequence is PTVYNFFHIGN. Zn(2+) is bound by residues Cys-211, His-236, and Glu-240. The 'KMSKS' region motif lies at 268–272; that stretch reads KMSKS. Lys-271 contributes to the ATP binding site.

This sequence belongs to the class-I aminoacyl-tRNA synthetase family. In terms of assembly, monomer. The cofactor is Zn(2+).

It is found in the cytoplasm. The enzyme catalyses tRNA(Cys) + L-cysteine + ATP = L-cysteinyl-tRNA(Cys) + AMP + diphosphate. The polypeptide is Cysteine--tRNA ligase (Clostridium botulinum (strain Alaska E43 / Type E3)).